The primary structure comprises 614 residues: Serine/threonine-protein kinase-like protein E (614 aa).

One can recognise a Protein kinase domain in the interval 15–404 (YLIQLHLGQN…NPNTNGAPLS (390 aa)). 21–29 (LGQNSLGQQ) is an ATP binding site. Residues 256-269 (PEQTDNGVGKSSTG) show a composition bias toward polar residues. The tract at residues 256–284 (PEQTDNGVGKSSTGEPPFPTVHQSPESSS) is disordered.

This sequence belongs to the protein kinase superfamily. Ser/Thr protein kinase family.

In terms of biological role, lacks protein kinase activity. The chain is Serine/threonine-protein kinase-like protein E (spkE) from Synechocystis sp. (strain ATCC 27184 / PCC 6803 / Kazusa).